Reading from the N-terminus, the 5141-residue chain is SCO-spondin (5141 aa).

Positions 1-17 (MLLPALLFGMLWAPANG) are cleaved as a signal peptide. Residues 18 to 102 (HWCEQIETVH…ACCPGWGGIH (85 aa)) enclose the EMI domain. N88, N130, N150, and N167 each carry an N-linked (GlcNAc...) asparagine glycan. A VWFD 1 domain is found at 193–364 (ATCATWSGFH…RLPGYEPGCL (172 aa)). Intrachain disulfides connect C195–C325, C217–C363, and C239–C245. Residues 472-527 (CPGGQLYSDCISSCPPSCSAVAQGEEGSCGKECVSGCECPTGLFWDGALCVPAAHC) enclose the TIL 1 domain. The VWFD 2 domain maps to 565–738 (AECAVGGDGH…FQVSGDGRCP (174 aa)). Disulfide bonds link C567–C700 and C591–C737. 2 N-linked (GlcNAc...) asparagine glycosylation sites follow: N657 and N822. In terms of domain architecture, TIL 2 spans 830 to 883 (CPGGQVYQECAPACGHYCGEPEDCKELGSCVAGCNCPPGLLWDLEGQCVPPSMC). 3 N-linked (GlcNAc...) asparagine glycosylation sites follow: N895, N949, and N991. A VWFD 3 domain is found at 1017 to 1187 (GWCQASGAPH…HSWRLNPLCP (171 aa)). Intrachain disulfides connect C1019–C1151, C1041–C1186, and C1062–C1069. The region spanning 1280–1336 (CEGGQVYEPCGSTCPPTCHDHHPELRWHCQAITCVEGCFCPEGTLLHGGTCVELTDC) is the TIL 3 domain. Residue N1357 is glycosylated (N-linked (GlcNAc...) asparagine). LDL-receptor class A domains are found at residues 1380–1417 (GCAEGEALCRESGHCVPLEWLCDNQDDCGDGSDEEGCD), 1420–1456 (VCGEGQMSCQSGRCLPLSLICDGQDDCGDGTDEQGCL), 1456–1492 (LCPQGFLACADGRCLPPALLCDGHPDCLDAADEESCL), and 1496–1534 (SCTSGEVSCVDGPCIRTIQLCDGVWDCPDGADEGPVHCS). Disulfide bonds link C1381–C1394, C1388–C1407, C1401–C1416, C1421–C1433, C1428–C1446, C1440–C1455, C1457–C1469, C1464–C1482, C1476–C1491, C1497–C1509, C1504–C1522, and C1516–C1533. Residues 1533 to 1567 (CSSPSLPTPPAGIGQNPSTSSPDTSPSPVGSASPA) are disordered. The span at 1549 to 1567 (PSTSSPDTSPSPVGSASPA) shows a compositional bias: low complexity. 2 consecutive LDL-receptor class A domains span residues 1569 to 1605 (PCSLSEFQCNSGECTPRGWRCDREEDCTDGSDELDCG) and 1607 to 1646 (PCKLYQMPCAHGPHCLSPGQLCDGVAQCPDGSDEDPDVCE). Disulfide bonds link C1570-C1582, C1577-C1595, C1589-C1604, C1608-C1621, C1615-C1634, and C1628-C1645. Residues N1655 and N1668 are each glycosylated (N-linked (GlcNAc...) asparagine). One can recognise an LDL-receptor class A 7 domain in the interval 1660 to 1700 (PCPEFSCPNGTCIDFLLVCDGSPDCELADETEPSLDEQGCG). 9 cysteine pairs are disulfide-bonded: C1661/C1671, C1666/C1684, C1678/C1699, C1711/C1747, C1715/C1752, C1726/C1737, C1767/C1964, C1771/C1969, and C1781/C1791. 2 TSP type-1 domains span residues 1699 to 1753 (CGTW…EACP) and 1755 to 1970 (DGEW…EPCE). Residue N1725 is glycosylated (N-linked (GlcNAc...) asparagine). N1814 is a glycosylation site (N-linked (GlcNAc...) asparagine). EGF-like domains follow at residues 1829–1868 (CPLTCDDISGEAVCSPDRPCSSPGCWCPEGKVLGTEGRCV) and 1869–1895 (RPRQCPCLVDGIRYWPGQRIKMDCQLC). The 61-residue stretch at 1970–2030 (EGCEQWGLTY…GMGESCCHCA (61 aa)) folds into the VWFC 1 domain. N-linked (GlcNAc...) asparagine glycosylation is present at N2035. Disulfide bonds link C2070-C2226, C2236-C2248, C2243-C2261, and C2255-C2270. The F5/8 type C domain maps to 2070 to 2226 (CYSPLGLAGL…IFLWVELLGC (157 aa)). The interval 2087-2109 (PLEHSTRAAPVEAPTAGPGPRED) is disordered. N2130 and N2148 each carry an N-linked (GlcNAc...) asparagine glycan. The LDL-receptor class A 8 domain occupies 2235–2271 (LCPGTRHRCANGDCALKGGPCDGAVDCEDGSDEEGCG). Residues 2262-2335 (EDGSDEEGCG…SPSASEGLLP (74 aa)) form a disordered region. Polar residues predominate over residues 2276–2294 (STASRVHSTARTPALSPTQ). A compositionally biased stretch (basic and acidic residues) spans 2301–2314 (HPREGLADMEHQQP). LDL-receptor class A domains are found at residues 2391-2427 (RCGPGQVPCDVLGCVEQEQLCDGREDCLDGSDEQHCA) and 2448-2484 (LCSPSQLSCGSGECLPLEHRCDLQVNCQDGSDEDDCV). 12 cysteine pairs are disulfide-bonded: C2392–C2404, C2399–C2417, C2411–C2426, C2449–C2461, C2456–C2474, C2468–C2483, C2486–C2522, C2497–C2501, C2532–C2537, C2552–C2589, C2556–C2594, and C2567–C2579. TSP type-1 domains lie at 2485–2538 (DCVL…QACP) and 2540–2595 (AGAW…QLCP). The region spanning 2618-2660 (PPCPPSCLDPEANRSCSGHCVEGCRCPPGLFLQDSHCLPLSEC) is the TIL 4 domain. N2630 and N2679 each carry an N-linked (GlcNAc...) asparagine glycan. TSP type-1 domains lie at 2700-2754 (SCGW…TDCG), 2758-2813 (PGWT…SLCP), and 2815-2868 (PSAW…HPCT). Disulfide bonds link C2701/C2739, C2712/C2716, C2749/C2753, C2769/C2807, C2773/C2812, C2789/C2797, C2827/C2862, C2831/C2867, and C2842/C2852. N-linked (GlcNAc...) asparagine glycosylation is found at N2921 and N2951. TSP type-1 domains are found at residues 2969–3024 (ACGW…RPCQ) and 3025–3068 (GPGA…QPCA). 3 cysteine pairs are disulfide-bonded: C2970–C3008, C2981–C2985, and C3018–C3023. N3046, N3101, N3148, and N3158 each carry an N-linked (GlcNAc...) asparagine glycan. The 53-residue stretch at 3075–3127 (CPKDQQWLDCAQGPASCAHLSTPREANQTCHPGCYCLSGMLLLNNVCVPAQDC) folds into the TIL 5 domain. TSP type-1 domains lie at 3168-3235 (QPAW…PGCN) and 3237-3292 (AGVW…QPCP). Cystine bridges form between C3180–C3229, C3184–C3234, C3195–C3219, C3249–C3286, C3253–C3291, and C3264–C3276. N3295 carries an N-linked (GlcNAc...) asparagine glycan. In terms of domain architecture, TIL 6 spans 3300–3350 (EGAEYSPCGPPCPRSCDDLVHCMWHCQPGCYCPPGKVLSADGAICVQPHHC). A glycan (N-linked (GlcNAc...) asparagine) is linked at N3384. TSP type-1 domains lie at 3393–3455 (SGDW…TACP) and 3457–3512 (DGAW…TPCT). 6 cysteine pairs are disulfide-bonded: C3405–C3448, C3409–C3454, C3420–C3432, C3469–C3504, C3472–C3511, and C3482–C3494. An N-linked (GlcNAc...) asparagine glycan is attached at N3506. Residues 3514–3570 (CGGGQDLLPCGQPCPHSCQDLSLGSTCQPGSSGCQSGCGCPPGQLSQDGLCVFPADC) enclose the TIL 7 domain. Residues N3584 and N3611 are each glycosylated (N-linked (GlcNAc...) asparagine). The 49-residue stretch at 3630–3678 (PGIWSSWGPWEKCSVPCGGGEQLRSRQCARPPCPGLAQQSRTCHIHVCR) folds into the TSP type-1 14 domain. 3 disulfides stabilise this stretch: C3642–C3672, C3646–C3677, and C3657–C3662. The N-linked (GlcNAc...) asparagine glycan is linked to N3787. TSP type-1 domains follow at residues 3806 to 3862 (RGYF…PECP), 3876 to 3928 (AGGW…PSCT), 3942 to 3998 (NCFW…RACP), and 4000 to 4055 (PGGW…MPCE). Intrachain disulfides connect C3818-C3856, C3822-C3861, and C3834-C3846. N3910 carries N-linked (GlcNAc...) asparagine glycosylation. Intrachain disulfides connect C3943–C3979, C3954–C3958, C3992–C3997, C4012–C4049, C4016–C4054, and C4027–C4039. Residues 4058–4113 (CPAGMEMVSCANRCPYSCSDLQEAVMCQEDQACQLGCRCSEGFLEQDGGCVPVGHC) enclose the TIL 8 domain. An N-linked (GlcNAc...) asparagine glycan is attached at N4135. TSP type-1 domains follow at residues 4155 to 4208 (HCAW…DPCP), 4249 to 4304 (PGGW…QLCL), 4306 to 4362 (LLEI…GPCQ), and 4364 to 4418 (DCMW…GNCS). Cystine bridges form between C4156-C4192, C4167-C4171, C4202-C4207, C4261-C4298, C4265-C4303, and C4276-C4288. N4345 is a glycosylation site (N-linked (GlcNAc...) asparagine). 3 cysteine pairs are disulfide-bonded: C4365–C4402, C4376–C4378, and C4412–C4417. The N-linked (GlcNAc...) asparagine glycan is linked to N4416. In terms of domain architecture, TIL 9 spans 4422–4477 (CLPPFEFQSCGSPCAGLCATHLSHQLCQDLPPCQPGCYCPMGLLEQDGGCILPEQC). The N-linked (GlcNAc...) asparagine glycan is linked to N4557. The TSP type-1 23 domain occupies 4608-4659 (TCQWGPWGPWSPCQVPCSGGFKLRWREASDNSVGECRGPWAQTESCNMGSCP). Disulfide bonds link C4609-C4643, C4620-C4624, and C4653-C4658. Residues 4673-4719 (DCANQCPRSCADLWEGVQCLQGPCSPGCRCPPGQLVQDGHCVPISSC) form the TIL 10 domain. N-linked (GlcNAc...) asparagine glycosylation is found at N4727, N4744, and N4749. Residues 4759-4812 (CPVLGPWSPWSECSAVCGGGTMVRYRSCEEHPDSAPCQALDMEQRVECNLQTCP) form the TSP type-1 24 domain. 3 cysteine pairs are disulfide-bonded: C4771–C4806, C4775–C4811, and C4786–C4795. One can recognise a TIL 11 domain in the interval 4814–4868 (CPPGQVLSTCATLCPSFCSHLWPGTICVREPCQLGCGCPGGQLLHSGTCIPPEAC). N4899, N4942, and N4949 each carry an N-linked (GlcNAc...) asparagine glycan. The 59-residue stretch at 4920 to 4978 (CPPGEILQLGELRPCEKTCLEMNKTQAWSNCTEAQVPGCVCQLGHFRSHTGLCVPEDHC) folds into the TIL 12 domain. The VWFC 2 domain maps to 4978 to 5036 (CECWHHGSPHLPGSEWQEACESCRCLHGKSVCTQHCPELSCAQGEVVVQEPGSCCPICQ). Disulfide bonds link C5047/C5095, C5061/C5112, C5071/C5128, and C5075/C5130. The CTCK domain occupies 5047 to 5134 (CRHLTELRNL…IHNCHCSACQ (88 aa)). The N-linked (GlcNAc...) asparagine glycan is linked to N5055.

Belongs to the thrombospondin family.

It is found in the secreted. Its subcellular location is the extracellular space. Its function is as follows. Involved in the modulation of neuronal aggregation. May be involved in developmental events during the formation of the central nervous system. The chain is SCO-spondin from Rattus norvegicus (Rat).